The sequence spans 486 residues: Transcription factor aptf-4 (486 aa).

2 disordered regions span residues 25–49 (CEPS…SAKM) and 150–173 (LSTT…NQEK). Residues 150 to 169 (LSTTSANFTPDWNTTTNGPC) are compositionally biased toward polar residues. Residues 301 to 430 (QRQRKVTCFS…IVEQAALYCE (130 aa)) are H-S-H (helix-span-helix), dimerization.

Belongs to the AP-2 family. Binds DNA as a dimer.

It is found in the nucleus. Functionally, sequence-specific DNA-binding protein that interacts with enhancer elements to regulate transcription of selected genes. Required for neuroblast and epidermal morphogenesis, perhaps acting in cooperation with transcription factor aptf-2. The sequence is that of Transcription factor aptf-4 from Caenorhabditis elegans.